We begin with the raw amino-acid sequence, 776 residues long: 5-methyltetrahydropteroyltriglutamate--homocysteine methyltransferase (776 aa).

5-methyltetrahydropteroyltri-L-glutamate contacts are provided by residues 16 to 19 (RELK) and Lys-112. Residues 432-434 (IGS) and Glu-485 each bind L-homocysteine. L-methionine contacts are provided by residues 432 to 434 (IGS) and Glu-485. 5-methyltetrahydropteroyltri-L-glutamate contacts are provided by residues 516-517 (RC) and Trp-562. Asp-600 serves as a coordination point for L-homocysteine. Residue Asp-600 participates in L-methionine binding. Glu-606 is a binding site for 5-methyltetrahydropteroyltri-L-glutamate. 3 residues coordinate Zn(2+): His-642, Cys-644, and Glu-666. His-695 serves as the catalytic Proton donor. Residue Cys-727 coordinates Zn(2+). A disordered region spans residues 755 to 776 (HAGAVHAGTPATRAEHAESALA). Basic and acidic residues predominate over residues 767–776 (RAEHAESALA).

It belongs to the vitamin-B12 independent methionine synthase family. It depends on Zn(2+) as a cofactor.

The catalysed reaction is 5-methyltetrahydropteroyltri-L-glutamate + L-homocysteine = tetrahydropteroyltri-L-glutamate + L-methionine. It functions in the pathway amino-acid biosynthesis; L-methionine biosynthesis via de novo pathway; L-methionine from L-homocysteine (MetE route): step 1/1. Catalyzes the transfer of a methyl group from 5-methyltetrahydrofolate to homocysteine resulting in methionine formation. In Ralstonia nicotianae (strain ATCC BAA-1114 / GMI1000) (Ralstonia solanacearum), this protein is 5-methyltetrahydropteroyltriglutamate--homocysteine methyltransferase.